Reading from the N-terminus, the 218-residue chain is Protein N-lysine methyltransferase METTL21A (218 aa).

S-adenosyl-L-methionine is bound by residues Trp-47, 73-75, Asp-94, Trp-125, and Ala-143; that span reads GAG.

The protein belongs to the methyltransferase superfamily. METTL21 family.

It is found in the cytoplasm. The catalysed reaction is L-lysyl-[protein] + 3 S-adenosyl-L-methionine = N(6),N(6),N(6)-trimethyl-L-lysyl-[protein] + 3 S-adenosyl-L-homocysteine + 3 H(+). Its function is as follows. Protein-lysine methyltransferase that selectively trimethylates residues in heat shock protein 70 (HSP70) family members. The polypeptide is Protein N-lysine methyltransferase METTL21A (mettl21a) (Danio rerio (Zebrafish)).